The chain runs to 180 residues: MNKQLDLIKSSIKSIPNYPKEGIIFRDITSLTEIPEAFTATVNLIAEAFRHKGITKIIGTESRGFIFGAPVAVALGLPFILVRKPGKLPREVISQSYQLEYGEDKLEIHADAIQKGDNVLVIDDLLATGGTVEACIKLVNRLGGDVKHAAFVINLPDLGGGERLRKQGVEPFTLVDFAGH.

The protein belongs to the purine/pyrimidine phosphoribosyltransferase family. In terms of assembly, homodimer.

It localises to the cytoplasm. The catalysed reaction is AMP + diphosphate = 5-phospho-alpha-D-ribose 1-diphosphate + adenine. It functions in the pathway purine metabolism; AMP biosynthesis via salvage pathway; AMP from adenine: step 1/1. Catalyzes a salvage reaction resulting in the formation of AMP, that is energically less costly than de novo synthesis. This Actinobacillus succinogenes (strain ATCC 55618 / DSM 22257 / CCUG 43843 / 130Z) protein is Adenine phosphoribosyltransferase.